The chain runs to 348 residues: tRNA N6-adenosine threonylcarbamoyltransferase (348 aa).

The Fe cation site is built by histidine 116 and histidine 120. Residues 138-142, aspartate 171, glycine 184, aspartate 188, and asparagine 277 contribute to the substrate site; that span reads QVSGG. Aspartate 309 contacts Fe cation.

It belongs to the KAE1 / TsaD family. Fe(2+) serves as cofactor.

The protein resides in the cytoplasm. The enzyme catalyses L-threonylcarbamoyladenylate + adenosine(37) in tRNA = N(6)-L-threonylcarbamoyladenosine(37) in tRNA + AMP + H(+). In terms of biological role, required for the formation of a threonylcarbamoyl group on adenosine at position 37 (t(6)A37) in tRNAs that read codons beginning with adenine. Is involved in the transfer of the threonylcarbamoyl moiety of threonylcarbamoyl-AMP (TC-AMP) to the N6 group of A37, together with TsaE and TsaB. TsaD likely plays a direct catalytic role in this reaction. The protein is tRNA N6-adenosine threonylcarbamoyltransferase of Lactobacillus gasseri (strain ATCC 33323 / DSM 20243 / BCRC 14619 / CIP 102991 / JCM 1131 / KCTC 3163 / NCIMB 11718 / NCTC 13722 / AM63).